Here is a 272-residue protein sequence, read N- to C-terminus: MSTDSESKRRAYREEKEGARKKSVKLAPEATPESKPDLPRKRYYRQRAHSNPFSDHSLDYPRNPDAMEWGKLYPEYANTDKKVEIADIGCGYGGLMIGLAKEYPQTMILGMEIRVQVTQYVEDRIIALREKHEKDEVNYQNIAVLRGNAMKFLPNFFHRGQLKKMFFCFPDPHFKQRKHKARIITTTLLSEYAYVLREEGVLYTITDVEDLHIWMVKHLDDHPLFERLDKEWEKNDKCVSIMYGSTEEGQKVARNKGSKFVACFRRVANPEE.

The span at 1–20 (MSTDSESKRRAYREEKEGAR) shows a compositional bias: basic and acidic residues. Residues 1-43 (MSTDSESKRRAYREEKEGARKKSVKLAPEATPESKPDLPRKRY) are disordered. Residues G89, 112 to 113 (EI), 148 to 149 (NA), and C168 contribute to the S-adenosyl-L-methionine site. D171 is an active-site residue. 246 to 248 (TEE) lines the S-adenosyl-L-methionine pocket.

It belongs to the class I-like SAM-binding methyltransferase superfamily. TrmB family. In terms of assembly, forms a complex with TRM82.

The protein localises to the nucleus. It catalyses the reaction guanosine(46) in tRNA + S-adenosyl-L-methionine = N(7)-methylguanosine(46) in tRNA + S-adenosyl-L-homocysteine. It functions in the pathway tRNA modification; N(7)-methylguanine-tRNA biosynthesis. Its function is as follows. Catalyzes the formation of N(7)-methylguanine at position 46 (m7G46) in tRNA. This is tRNA (guanine-N(7)-)-methyltransferase from Meyerozyma guilliermondii (strain ATCC 6260 / CBS 566 / DSM 6381 / JCM 1539 / NBRC 10279 / NRRL Y-324) (Yeast).